The chain runs to 73 residues: Disintegrin cerastin (73 aa).

Positions 1-73 (EAGEECDCGT…ADCPRNGLYG (73 aa)) constitute a Disintegrin domain. 6 disulfides stabilise this stretch: C6/C21, C8/C16, C15/C38, C29/C35, C34/C59, and C47/C66. The Cell attachment site signature appears at 51–53 (RGD).

This sequence belongs to the venom metalloproteinase (M12B) family. P-II subfamily. P-IIa sub-subfamily. In terms of assembly, monomer (disintegrin). In terms of tissue distribution, expressed by the venom gland.

It is found in the secreted. In terms of biological role, inhibits fibrinogen interaction with platelets. Acts by binding to alpha-IIb/beta-3 (ITGA2B/ITGB3) on the platelet surface and inhibits aggregation induced by ADP, thrombin, platelet-activating factor and collagen. This chain is Disintegrin cerastin, found in Crotalus cerastes cerastes (Mojave desert sidewinder).